Reading from the N-terminus, the 178-residue chain is Large ribosomal subunit protein bL17 (178 aa).

The segment at Pro-150–Asp-178 is disordered. Residues Asp-168 to Asp-178 are compositionally biased toward basic and acidic residues.

It belongs to the bacterial ribosomal protein bL17 family. As to quaternary structure, part of the 50S ribosomal subunit. Contacts protein L32.

The protein is Large ribosomal subunit protein bL17 of Geobacter metallireducens (strain ATCC 53774 / DSM 7210 / GS-15).